Here is a 388-residue protein sequence, read N- to C-terminus: WD repeat-containing protein 55 (388 aa).

Positions methionine 1–leucine 20 are enriched in acidic residues. A disordered region spans residues methionine 1–proline 33. 7 WD repeats span residues valine 37 to lysine 76, histidine 83 to arginine 122, alanine 126 to aspartate 164, glutamine 167 to leucine 206, proline 209 to aspartate 248, alanine 251 to threonine 290, and glutamine 293 to valine 333. A Phosphoserine modification is found at serine 355. The disordered stretch occupies residues arginine 364–aspartate 388. Positions alanine 370–glutamate 379 are enriched in basic and acidic residues.

It belongs to the WD repeat WDR55 family.

The protein resides in the nucleus. It localises to the nucleolus. Its subcellular location is the cytoplasm. Nucleolar protein that acts as a modulator of rRNA synthesis. Plays a central role during organogenesis. This is WD repeat-containing protein 55 (Wdr55) from Mus musculus (Mouse).